The sequence spans 126 residues: Arginine decarboxylase proenzyme (126 aa).

The active-site Schiff-base intermediate with substrate; via pyruvic acid is serine 74. A Pyruvic acid (Ser); by autocatalysis modification is found at serine 74. The active-site Proton acceptor; for processing activity is the histidine 79. Cysteine 94 acts as the Proton donor; for catalytic activity in catalysis.

The protein belongs to the prokaryotic AdoMetDC family. Type 1 subfamily. Heterooctamer of four alpha and four beta chains arranged as a tetramer of alpha/beta heterodimers. Requires pyruvate as cofactor. In terms of processing, is synthesized initially as an inactive proenzyme. Formation of the active enzyme involves a self-maturation process in which the active site pyruvoyl group is generated from an internal serine residue via an autocatalytic post-translational modification. Two non-identical subunits are generated from the proenzyme in this reaction, and the pyruvate is formed at the N-terminus of the alpha chain, which is derived from the carboxyl end of the proenzyme. The post-translation cleavage follows an unusual pathway, termed non-hydrolytic serinolysis, in which the side chain hydroxyl group of the serine supplies its oxygen atom to form the C-terminus of the beta chain, while the remainder of the serine residue undergoes an oxidative deamination to produce ammonia and the pyruvoyl group blocking the N-terminus of the alpha chain.

The catalysed reaction is L-arginine + H(+) = agmatine + CO2. Its pathway is amine and polyamine biosynthesis; agmatine biosynthesis; agmatine from L-arginine: step 1/1. In terms of biological role, specifically catalyzes the decarboxylation of L-arginine to agmatine. Has no S-adenosylmethionine decarboxylase (AdoMetDC) activity. This chain is Arginine decarboxylase proenzyme, found in Pyrobaculum neutrophilum (strain DSM 2338 / JCM 9278 / NBRC 100436 / V24Sta) (Thermoproteus neutrophilus).